The primary structure comprises 968 residues: Putative pectinesterase/pectinesterase inhibitor 26 (968 aa).

The chain crosses the membrane as a helical span at residues isoleucine 33–isoleucine 53. The interval leucine 71 to isoleucine 230 is pectinesterase inhibitor 26 A. Residues asparagine 101, asparagine 158, asparagine 219, asparagine 295, asparagine 352, asparagine 400, asparagine 464, asparagine 541, asparagine 559, and asparagine 603 are each glycosylated (N-linked (GlcNAc...) asparagine). The pectinesterase inhibitor 26 B stretch occupies residues leucine 265–isoleucine 430. Residues proline 453–isoleucine 614 are pectinesterase inhibitor 26 C. The segment at histidine 660–aspartate 954 is pectinesterase 26. Threonine 735 serves as a coordination point for substrate. N-linked (GlcNAc...) asparagine glycosylation is present at asparagine 737. Glutamine 765 provides a ligand contact to substrate. Aspartate 788 (proton donor; for pectinesterase activity) is an active-site residue. A disulfide bridge connects residues cysteine 802 and cysteine 822. The active-site Nucleophile; for pectinesterase activity is aspartate 809. Asparagine 863 carries an N-linked (GlcNAc...) asparagine glycan. Positions 872 and 874 each coordinate substrate. Residue asparagine 900 is glycosylated (N-linked (GlcNAc...) asparagine).

The protein in the N-terminal section; belongs to the PMEI family. In the C-terminal section; belongs to the pectinesterase family. As to expression, expressed in flowers.

Its subcellular location is the membrane. The enzyme catalyses [(1-&gt;4)-alpha-D-galacturonosyl methyl ester](n) + n H2O = [(1-&gt;4)-alpha-D-galacturonosyl](n) + n methanol + n H(+). It functions in the pathway glycan metabolism; pectin degradation; 2-dehydro-3-deoxy-D-gluconate from pectin: step 1/5. Functionally, acts in the modification of cell walls via demethylesterification of cell wall pectin. This is Putative pectinesterase/pectinesterase inhibitor 26 (PME26) from Arabidopsis thaliana (Mouse-ear cress).